Reading from the N-terminus, the 394-residue chain is Hemagglutinin-esterase (394 aa).

Residues 1–16 form the signal peptide; it reads MARFIILFLLLAPVYS. Over 17 to 347 the chain is Extracellular; that stretch reads RLCLRNHPDT…NNRVDAIPPQ (331 aa). Ser-32 is an active-site residue. A Cell attachment site motif is present at residues 119-121; it reads RGD. Active-site residues include Asp-261 and His-264. The N-linked (GlcNAc...) asparagine; by host glycan is linked to Asn-333. The highly polymorphic region stretch occupies residues 335 to 358; sequence TDVNNRVDAIPPQLSNIFISMGVA. The helical transmembrane segment at 348–368 threads the bilayer; it reads LSNIFISMGVAGFGIALFLAG. Topologically, residues 369–394 are cytoplasmic; the sequence is WKACVWIAAFMYKSRGRNPPANLSVA.

The protein localises to the host membrane. Its subcellular location is the virion membrane. The enzyme catalyses N-acetyl-9-O-acetylneuraminate + H2O = N-acetylneuraminate + acetate + H(+). It carries out the reaction N-acetyl-4-O-acetylneuraminate + H2O = N-acetylneuraminate + acetate + H(+). Functionally, performs attachment to host receptor thereby inducing virus particle entry into target cell. Binds specifically to 5-N-acetyl-4-O-acetyl neuraminic acid on host cells, which plays a major role in cell tropism of the virus. ALso mediates de-O-acetylation of N-acetyl-4-O-acetylneuraminic acid. This receptor-destroying activity is important for virus release as it probably helps preventing self-aggregation and ensures the efficient spread of the progeny virus from cell to cell. The highly polymorphic region (HPR) modulates the virulence in host. Catalyzes the removal of terminal sialic acid residues from viral and cellular glycoconjugates. The sequence is that of Hemagglutinin-esterase from Gadus morhua (Atlantic cod).